Consider the following 173-residue polypeptide: MIDDPLVKSLLTNVVEDESNLPIVQALIDGVETDEAIAEKTEIKLNIVRKILYKLYDMGLATYKRSKDPETQWFTYSWKFEEQEVINHIKSDSEEYLKMLNKELEKEEDTMYFVCPQGHIRLDFETATEYDFICPECGEELEFFDNTNLIKQIKDDIKTVESNYKSFTKKVDA.

Residues 3–86 form the HTH TFE/IIEalpha-type domain; sequence DDPLVKSLLT…SWKFEEQEVI (84 aa).

The protein belongs to the TFE family. In terms of assembly, monomer. Interaction with RNA polymerase subunits RpoF and RpoE is necessary for Tfe stimulatory transcription activity. Able to interact with Tbp and RNA polymerase in the absence of DNA promoter. Interacts both with the preinitiation and elongation complexes.

Its function is as follows. Transcription factor that plays a role in the activation of archaeal genes transcribed by RNA polymerase. Facilitates transcription initiation by enhancing TATA-box recognition by TATA-box-binding protein (Tbp), and transcription factor B (Tfb) and RNA polymerase recruitment. Not absolutely required for transcription in vitro, but particularly important in cases where Tbp or Tfb function is not optimal. It dynamically alters the nucleic acid-binding properties of RNA polymerases by stabilizing the initiation complex and destabilizing elongation complexes. Seems to translocate with the RNA polymerase following initiation and acts by binding to the non template strand of the transcription bubble in elongation complexes. The sequence is that of Transcription factor E from Methanobrevibacter smithii (strain ATCC 35061 / DSM 861 / OCM 144 / PS).